The chain runs to 108 residues: Phosphoribosyl-ATP pyrophosphatase (108 aa).

It belongs to the PRA-PH family.

It localises to the cytoplasm. The catalysed reaction is 1-(5-phospho-beta-D-ribosyl)-ATP + H2O = 1-(5-phospho-beta-D-ribosyl)-5'-AMP + diphosphate + H(+). The protein operates within amino-acid biosynthesis; L-histidine biosynthesis; L-histidine from 5-phospho-alpha-D-ribose 1-diphosphate: step 2/9. This Dechloromonas aromatica (strain RCB) protein is Phosphoribosyl-ATP pyrophosphatase.